We begin with the raw amino-acid sequence, 643 residues long: Capsid scaffolding protein (643 aa).

Positions 1–15 (MSSPSPSSSSSDHPS) are enriched in low complexity. The interval 1–31 (MSSPSPSSSSSDHPSSPAPVPAPPGPVPEAA) is disordered. The segment covering 16 to 27 (SPAPVPAPPGPV) has biased composition (pro residues). Active-site charge relay system residues include histidine 82, serine 151, and histidine 173. The interval 283–306 (SARGGEDPPTAAIATTPHPATDAT) is disordered. Residues 290–306 (PPTAAIATTPHPATDAT) are compositionally biased toward low complexity. The segment at 324–343 (EDLISVPRSTFMTMLQTNLD) is interaction with pAP. The Nuclear localization signal signature appears at 439-445 (RPGKRKR). Disordered regions lie at residues 485-519 (QQFP…QAFY) and 544-625 (CAPG…STKP). Over residues 489-515 (QPLPQPQLQPQAQPQPQPAPQLYPAPP) the composition is skewed to pro residues. Positions 607–616 (PQQQQQPQQQ) are enriched in low complexity. Residues 623–643 (TKPSQISQLQKIFCEELLNKT) are interaction with major capsid protein.

Belongs to the herpesviridae capsid scaffolding protein family. In terms of assembly, homomultimer. Interacts with major capsid protein. As to quaternary structure, exists in a monomer-dimer equilibrium with the dimer being the active species. Post-translationally, capsid scaffolding protein is cleaved by assemblin after formation of the spherical procapsid. As a result, the capsid obtains its mature, icosahedral shape. Cleavages occur at two or more sites: release (R-site) and maturation (M-site).

It is found in the host cytoplasm. Its subcellular location is the host nucleus. The catalysed reaction is Cleaves -Ala-|-Ser- and -Ala-|-Ala- bonds in the scaffold protein.. Its function is as follows. Acts as a scaffold protein by binding major capsid protein in the cytoplasm, inducing the nuclear localization of both proteins. Multimerizes in the nucleus such as major capsid protein forms the icosahedral T=16 capsid. Autocatalytic cleavage releases the assembly protein, and subsequently abolishes interaction with major capsid protein. Cleavages products are evicted from the capsid before or during DNA packaging. In terms of biological role, protease that plays an essential role in virion assembly within the nucleus. Catalyzes the cleavage of the assembly protein after formation of the spherical procapsid. By that cleavage, the capsid matures and gains its icosahedral shape. The cleavage sites seem to include -Ala-Ser-, -Ala-Ala-, as well as Ala-Thr bonds. Assemblin and cleavages products are evicted from the capsid before or during DNA packaging. Plays a major role in capsid assembly. Acts as a scaffold protein by binding major capsid protein. Multimerizes in the nucleus such as major capsid protein forms the icosahedral T=16 capsid. Cleaved by assemblin after capsid completion. The cleavages products are evicted from the capsid before or during DNA packaging. The sequence is that of Capsid scaffolding protein from Equine herpesvirus 2 (strain 86/87) (EHV-2).